Here is a 397-residue protein sequence, read N- to C-terminus: Adenylosuccinate synthetase (397 aa).

GTP-binding positions include 11 to 17 (GDEGKGK) and 39 to 41 (GHT). The active-site Proton acceptor is the D12. The Mg(2+) site is built by D12 and G39. Residues 12 to 15 (DEGK), 37 to 40 (NAGH), T125, R139, Q212, T227, and R290 each bind IMP. H40 functions as the Proton donor in the catalytic mechanism. 286–292 (STTGRPR) lines the substrate pocket. GTP is bound by residues R292, 318 to 320 (KAD), and 386 to 388 (STG).

The protein belongs to the adenylosuccinate synthetase family. As to quaternary structure, homodimer. Mg(2+) is required as a cofactor.

The protein localises to the cytoplasm. It carries out the reaction IMP + L-aspartate + GTP = N(6)-(1,2-dicarboxyethyl)-AMP + GDP + phosphate + 2 H(+). The protein operates within purine metabolism; AMP biosynthesis via de novo pathway; AMP from IMP: step 1/2. Its function is as follows. Plays an important role in the de novo pathway of purine nucleotide biosynthesis. Catalyzes the first committed step in the biosynthesis of AMP from IMP. The sequence is that of Adenylosuccinate synthetase from Thermotoga maritima (strain ATCC 43589 / DSM 3109 / JCM 10099 / NBRC 100826 / MSB8).